The primary structure comprises 250 residues: NAD(P)H-quinone oxidoreductase subunit K, chloroplastic (250 aa).

4 residues coordinate [4Fe-4S] cluster: Cys67, Cys68, Cys132, and Cys163.

It belongs to the complex I 20 kDa subunit family. As to quaternary structure, NDH is composed of at least 16 different subunits, 5 of which are encoded in the nucleus. It depends on [4Fe-4S] cluster as a cofactor.

The protein localises to the plastid. Its subcellular location is the chloroplast thylakoid membrane. The enzyme catalyses a plastoquinone + NADH + (n+1) H(+)(in) = a plastoquinol + NAD(+) + n H(+)(out). It catalyses the reaction a plastoquinone + NADPH + (n+1) H(+)(in) = a plastoquinol + NADP(+) + n H(+)(out). In terms of biological role, NDH shuttles electrons from NAD(P)H:plastoquinone, via FMN and iron-sulfur (Fe-S) centers, to quinones in the photosynthetic chain and possibly in a chloroplast respiratory chain. The immediate electron acceptor for the enzyme in this species is believed to be plastoquinone. Couples the redox reaction to proton translocation, and thus conserves the redox energy in a proton gradient. The polypeptide is NAD(P)H-quinone oxidoreductase subunit K, chloroplastic (Adiantum capillus-veneris (Maidenhair fern)).